Here is a 526-residue protein sequence, read N- to C-terminus: Flavonoid 3'-monooxygenase CYP75B3 (526 aa).

The chain crosses the membrane as a helical span at residues 6 to 26 (LPLLLGSLAVSAAVWYLVYFL). C461 serves as a coordination point for heme.

It belongs to the cytochrome P450 family. The cofactor is heme.

The protein localises to the membrane. The enzyme catalyses a 3'-unsubstituted flavone + reduced [NADPH--hemoprotein reductase] + O2 = a 3'-hydroxyflavone + oxidized [NADPH--hemoprotein reductase] + H2O + H(+). Its pathway is secondary metabolite biosynthesis; flavonoid biosynthesis. In terms of biological role, catalyzes the 3'-hydroxylation of the flavonoid B-ring to the 3',4'-hydroxylated state. Catalyzes the 3'-hydroxylation of apigenin to generate luteolin. The chain is Flavonoid 3'-monooxygenase CYP75B3 from Oryza sativa subsp. japonica (Rice).